We begin with the raw amino-acid sequence, 718 residues long: MKIIVAAEELPICASRMEPSEAIKNWISTPLKKIPHPDKASKIQIEFGDRSKESLHLFAKPHFMVPDMLDDDEMFFVGAPGFYSPEEFSDEDCRRIEESMKAYRCYPIFQKRVKYSKMIEEILGKNTYEFVQSNFDHANMFARYKEYNTRWHEKIMEIYEEGDVVWVMDHSLFLLPGMLGNSIPVGMSASVPFSSLLKCIPFWEQIFSSILCCRYIEFNESSSKESFDLLVSQKTGFCMGDPGYKDIREPLTCVGKKGIDKDVLLKMSSEVHEFEGLGKGKVILLPSDSQTHLLGVEAYLSRYGKEITVLFLRTRVLNGDSDKQAEVMRLREYLEINYKVLSREFTPASDPEFISMLKRCDLCHCPEVADVCSLFGIPVVRNNPYDFFDIADEINENLMQRGEGSKEGSSEVIGKMEWKKRFMTSLLSISGMEYDVDLEPKEPRIRSSLSMDQTGHKKVDAKKKPGIRKKNREKEEAVEIILNNKEDANAARIVNDFKKSKARTLVMDYDGTLTNIVARPPMAAPTQEIKDLLIRLGKICRVVISTGRSVEDCDKFFPKEIEVFAEHGACHRIDGKWKEGGTFPQKDLAWRIGQFFLARTPGSELERKKTGYAFHFRNVSPLIGVKQARALFELLMRVCKDYVKKGNHVIEVRSSKKSCAMEKIEEGFVLCAGDDVADEDMFDVCKGYTIKVGDQSTSAAYRVKDPENFRMLLGRLLE.

The interval 449–470 (LSMDQTGHKKVDAKKKPGIRKK) is disordered. Positions 459–470 (VDAKKKPGIRKK) are enriched in basic residues.

In the N-terminal section; belongs to the glycosyltransferase 20 family. It in the C-terminal section; belongs to the trehalose phosphatase family.

It carries out the reaction alpha,alpha-trehalose 6-phosphate + H2O = alpha,alpha-trehalose + phosphate. This Encephalitozoon cuniculi (strain GB-M1) (Microsporidian parasite) protein is Probable trehalose-phosphatase.